A 754-amino-acid polypeptide reads, in one-letter code: MVPAFEGAGAVEGLTIWRIENFEVVPYPKEKYGQFYQGDSYIVLYTRDVNGNLSWDLHFWLGSETSQDEAGTAAIKTVELDDQLGGVPVQHREVEGHETSLFLSRFKKGVRYLKGGVASGFHHVDPDAPYPARLFHVKGRRNIRIRQVEVGVGSMNKGDCFILDCGSQVYAYMGPSSRKMDRLKAIQAANPVRADDHAGKAKVIVIDETASGSEAGESSPGLGGGSPDDVADEDTGVDDSAFERSEVNVVTLHHIFEDGDGVIQTNMIGEKPLLQSMLDSGDCFLLDTGVGVYVWIGSGSSKKEKVKSMELAAGYMEKKGYPTYTNVQRVVEKAEPAVFKAYFKTWREPQEQIGLGRVFTQRQMSAVSATETDFDVSSLHAEKRRLLQKNAGPAFALCPIMVLARRNLGPLRTLKLEPVDESTHGFFFGGDSYVLKYIYEVNGNERYILYFWQGCASSQDEKASSAIHTVRLDNELCGKAVQVRVVQGYEPAHFLRIFKGRMVIFLGGKASGFKNVHDHDTYDVDGTRLFRVRGTCDFDTRAIQQTEVAGSLNSDDVFVLETPGKTYLWIGKGASEEEKAMGEKVVELVSPGRDMVTVAEGEEDDDFWGGLGGKGDYQTARDLDRPLLYPRLFHCTISPAGCLRVNEMSDFAQEDLNEDDVMVLDSGDEVYVWVGQGSDDQEKEKAFTMAENYIKTDPTERTLDATVILRINQGEEPAAFTSIFPAWNPDMWQKGLVSYDDMKAQVPETNAAVE.

Residues 1–120 (MVPAFEGAGA…RYLKGGVASG (120 aa)) form an actin-severing region. One copy of the Gelsolin-like 1 repeat lies at 22 to 71 (FEVVPYPKEKYGQFYQGDSYIVLYTRDVNGNLSWDLHFWLGSETSQDEAG). Residues 68–71 (DEAG) form an actin-actin interfilament contact point region. A 1,2-diacyl-sn-glycero-3-phospho-(1D-myo-inositol-4,5-bisphosphate) contacts are provided by residues 101-108 (LFLSRFKK) and 133-141 (RLFHVKGRR). The stretch at 143–183 (IRIRQVEVGVGSMNKGDCFILDCGSQVYAYMGPSSRKMDRL) is one Gelsolin-like 2 repeat. Residues 209 to 238 (TASGSEAGESSPGLGGGSPDDVADEDTGVD) form a disordered region. The segment covering 210–220 (ASGSEAGESSP) has biased composition (low complexity). Gelsolin-like repeat units lie at residues 266-306 (NMIG…KEKV), 414-463 (LKLE…DEKA), 538-580 (FDTR…EEKA), and 643-684 (LRVN…QEKE). The actin-binding, Ca-sensitive stretch occupies residues 386–751 (LLQKNAGPAF…MKAQVPETNA (366 aa)). Positions 430, 431, 461, 556, 578, 659, 660, and 682 each coordinate Ca(2+).

Belongs to the villin/gelsolin family. As to expression, tail muscle.

The protein resides in the cytoplasm. It localises to the cytoskeleton. Its function is as follows. Calcium-regulated, actin-modulating protein that binds to the plus (or barbed) ends of actin monomers or filaments, preventing monomer exchange (end-blocking or capping). It can promote the assembly of monomers into filaments (nucleation) as well as sever filaments already formed. The sequence is that of Gelsolin, cytoplasmic from Homarus americanus (American lobster).